Consider the following 194-residue polypeptide: RNA polymerase II subunit A C-terminal domain phosphatase SSU72 like protein 1 (194 aa).

Belongs to the SSU72 phosphatase family.

It is found in the nucleus. The enzyme catalyses O-phospho-L-seryl-[protein] + H2O = L-seryl-[protein] + phosphate. It catalyses the reaction O-phospho-L-threonyl-[protein] + H2O = L-threonyl-[protein] + phosphate. In terms of biological role, protein phosphatase that catalyzes the dephosphorylation of the C-terminal domain of RNA polymerase II. Plays a role in RNA processing and termination. The polypeptide is RNA polymerase II subunit A C-terminal domain phosphatase SSU72 like protein 1 (Homo sapiens (Human)).